The following is a 247-amino-acid chain: Cell division protein ZapD (247 aa).

It belongs to the ZapD family. In terms of assembly, interacts with FtsZ.

The protein resides in the cytoplasm. Its function is as follows. Cell division factor that enhances FtsZ-ring assembly. Directly interacts with FtsZ and promotes bundling of FtsZ protofilaments, with a reduction in FtsZ GTPase activity. The polypeptide is Cell division protein ZapD (Citrobacter koseri (strain ATCC BAA-895 / CDC 4225-83 / SGSC4696)).